Here is a 641-residue protein sequence, read N- to C-terminus: MEGTCFLRGQPLTTIPSLPSRKGFLLQRWKTNRIVRFSGFKNHSVSGKSRSFDLSLRASGPIRASSVVTEASPTNLNSKEEDLVFVAGATGKVGSRTVRELLKLGFRVRAGVRSAQRAGSLVQSVKEMKLQNTDEGTQPVEKLEIVECDLEKKDSIQPALGNASVIICCIGASEKEISDITGPYRIDYLATKNLVDAATSAKVNNFILVTSLGTNKFGFPAAILNLFWGVLCWKRKAEEALIESGLNYAIVRPGGMERPTDAYKETHNLTLALDDTLFGGQVSNLQVAELLACMAKNPQLSFSKIVEVVAETTAPLTPIEKLLEKIPSKRPYVPPPKASVATKEVKPVPTKPVTQEPTAPKEDEAPPKEKNVKPRPLSPYASYEDLKPPTSPIPNSTTSVSPAKSKEVDATQVPVEANVVPVPDSTSNVPVVEVKQVEEKKERPLSPYARYENLKPPSSPSPTASSTRKSDSLSPGPTDSDTDKSSTVAKTVTETAVATSVTETSVATSVPETAVATSVTETAAPATSKMRPLSPYAIYADLKPPTSPTPASTGPKEAASVEDNSELPGGNNDVLKTVDGNLNTIPPSTPEAVPVVSSAIDTSLASGDNTAQPKPRPLSPYTMYADMKPPTSPLPSPVTNH.

Residues 1–63 (MEGTCFLRGQ…LSLRASGPIR (63 aa)) constitute a chloroplast transit peptide. An N-acetylalanine modification is found at alanine 64. Position 84 to 113 (84 to 113 (VFVAGATGKVGSRTVRELLKLGFRVRAGVR)) interacts with NADP(+). The tract at residues 328 to 641 (SKRPYVPPPK…SPLPSPVTNH (314 aa)) is disordered. The span at 359 to 372 (APKEDEAPPKEKNV) shows a compositional bias: basic and acidic residues. Repeat copies occupy residues 376–397 (PLSPYASYEDLKPPTSPIPNST) and 444–465 (PLSPYARYENLKPPSSPSPTAS). A 4 X 22 AA approximate repeats region spans residues 376–638 (PLSPYASYED…PPTSPLPSPV (263 aa)). Positions 393–402 (IPNSTTSVSP) are enriched in low complexity. A compositionally biased stretch (basic and acidic residues) spans 435–444 (KQVEEKKERP). The span at 485 to 528 (SSTVAKTVTETAVATSVTETSVATSVPETAVATSVTETAAPATS) shows a compositional bias: low complexity. Repeat 3 spans residues 532-553 (PLSPYAIYADLKPPTSPTPAST). The segment covering 599 to 612 (AIDTSLASGDNTAQ) has biased composition (polar residues). Copy 4 of the repeat occupies 617–638 (PLSPYTMYADMKPPTSPLPSPV). A compositionally biased stretch (pro residues) spans 630–641 (PTSPLPSPVTNH).

Part of the Tic complex. Interacts with TIC110 and TIC55. Interacts with LFNR1 and LFNR2. Component of high molecular weight thylakoid LFNRs-containing protein complexes containing LIR1, LFNR1, LFNR2, TIC62 and TROL proteins. In terms of tissue distribution, expressed in cotyledons and leaves, but not in roots.

It is found in the plastid. It localises to the chloroplast inner membrane. The protein resides in the chloroplast stroma. The protein localises to the chloroplast thylakoid. Functionally, involved in protein precursor import into chloroplasts. Part of the redox regulon consisting of TIC32, TIC 55 and TIC62. Acts as a membrane anchor of LFNR1 and LFNR2. Has a NADPH-dependent dehydrogenase activity, but only after preincubation with lipids. The protein is Protein TIC 62, chloroplastic of Arabidopsis thaliana (Mouse-ear cress).